The sequence spans 418 residues: Actin-like protein C08B11.6 (418 aa).

It belongs to the actin family. ARP6 subfamily.

It localises to the cytoplasm. Its subcellular location is the cytoskeleton. The chain is Actin-like protein C08B11.6 (arp-6) from Caenorhabditis elegans.